A 142-amino-acid chain; its full sequence is HTH-type transcriptional regulator MntR (142 aa).

One can recognise an HTH dtxR-type domain in the interval 1–63 (MPTPSMEDYI…YEKYRGLVLT (63 aa)). Positions 8, 11, 77, 99, 102, and 103 each coordinate Mn(2+).

Belongs to the DtxR/MntR family. As to quaternary structure, homodimer.

Its subcellular location is the cytoplasm. DNA binding is strongly activated by Mn(2+). In terms of biological role, central regulator of manganese homeostasis. The protein is HTH-type transcriptional regulator MntR of Bacillus cereus (strain B4264).